Consider the following 469-residue polypeptide: Cytosolic beta-glucosidase (469 aa).

Substrate is bound by residues Gln-17, His-120, and Asn-164. Glu-165 functions as the Proton donor in the catalytic mechanism. Tyr-309 is a substrate binding site. Glu-373 (nucleophile) is an active-site residue. Substrate-binding positions include Trp-417 and 424 to 425 (EW).

This sequence belongs to the glycosyl hydrolase 1 family. Klotho subfamily. In terms of assembly, may interact with NEU2. In terms of processing, the N-terminus is blocked. In terms of tissue distribution, present in small intestine (at protein level). Expressed in liver, small intestine, colon, spleen and kidney. Down-regulated in renal cell carcinomas and hepatocellular carcinomas.

It is found in the cytoplasm. It localises to the cytosol. It carries out the reaction Hydrolysis of terminal, non-reducing beta-D-glucosyl residues with release of beta-D-glucose.. The enzyme catalyses a beta-D-glucosyl-(1&lt;-&gt;1')-N-acylsphing-4-enine + H2O = an N-acylsphing-4-enine + D-glucose. The catalysed reaction is a beta-D-galactosyl-(1&lt;-&gt;1')-N-acylsphing-4-enine + H2O = an N-acylsphing-4-enine + D-galactose. It catalyses the reaction beta-D-glucosyl-(1&lt;-&gt;1)-sphing-4-enine + H2O = sphing-4-enine + D-glucose. It carries out the reaction beta-D-glucosyl-(1&lt;-&gt;1)-N-octadecanoylsphing-4-enine + H2O = N-octadecanoylsphing-4-enine + D-glucose. The enzyme catalyses beta-D-galactosyl-(1&lt;-&gt;1)-sphing-4-enine + H2O = sphing-4-enine + D-galactose. The catalysed reaction is beta-D-galactosyl-(1&lt;-&gt;1')-N-octadecanoylsphing-4-enine + H2O = N-octadecanoylsphing-4-enine + D-galactose. It catalyses the reaction a beta-D-xylosyl-(1&lt;-&gt;1')-N-acylsphing-4-enine + cholesterol = cholesteryl 3-beta-D-xyloside + an N-acylsphing-4-enine. Its activity is regulated as follows. Inhibited by 2,4-dinitrophenyl-2-fluoro-2-deoxy-beta-D-glucopyranoside. Inhibited by sodium taurocholate. Inhibited by alpha-1-C-nonyl-DIX/AnDIX. The glucosylceramidase activity is slightly inhibited by conduritol B epoxide/CBE while the galactosylceramidase activity is not. Functionally, neutral cytosolic beta-glycosidase with a broad substrate specificity that could play a role in the catabolism of glycosylceramides. Has a significant glucosylceramidase activity in vitro. However, that activity is relatively low and its significance in vivo is not clear. Hydrolyzes galactosylceramides/GalCers, glucosylsphingosines/GlcSphs and galactosylsphingosines/GalSphs. However, the in vivo relevance of these activities is unclear. It can also hydrolyze a broad variety of dietary glycosides including phytoestrogens, flavonols, flavones, flavanones and cyanogens in vitro and could therefore play a role in the metabolism of xenobiotics. Possesses transxylosylase activity in vitro using xylosylated ceramides/XylCers (such as beta-D-xylosyl-(1&lt;-&gt;1')-N-acylsphing-4-enine) as xylosyl donors and cholesterol as acceptor. Could also play a role in the catabolism of cytosolic sialyl free N-glycans. In Homo sapiens (Human), this protein is Cytosolic beta-glucosidase.